Consider the following 341-residue polypeptide: Tetraacyldisaccharide 4'-kinase (341 aa).

54–61 (TVGGAGKT) is a binding site for ATP.

The protein belongs to the LpxK family.

It carries out the reaction a lipid A disaccharide + ATP = a lipid IVA + ADP + H(+). Its pathway is glycolipid biosynthesis; lipid IV(A) biosynthesis; lipid IV(A) from (3R)-3-hydroxytetradecanoyl-[acyl-carrier-protein] and UDP-N-acetyl-alpha-D-glucosamine: step 6/6. Functionally, transfers the gamma-phosphate of ATP to the 4'-position of a tetraacyldisaccharide 1-phosphate intermediate (termed DS-1-P) to form tetraacyldisaccharide 1,4'-bis-phosphate (lipid IVA). This chain is Tetraacyldisaccharide 4'-kinase, found in Brucella melitensis biotype 2 (strain ATCC 23457).